The following is a 166-amino-acid chain: Large ribosomal subunit protein uL10 (166 aa).

It belongs to the universal ribosomal protein uL10 family. In terms of assembly, part of the ribosomal stalk of the 50S ribosomal subunit. The N-terminus interacts with L11 and the large rRNA to form the base of the stalk. The C-terminus forms an elongated spine to which L12 dimers bind in a sequential fashion forming a multimeric L10(L12)X complex.

Functionally, forms part of the ribosomal stalk, playing a central role in the interaction of the ribosome with GTP-bound translation factors. The protein is Large ribosomal subunit protein uL10 of Ectopseudomonas mendocina (strain ymp) (Pseudomonas mendocina).